An 871-amino-acid chain; its full sequence is Synaptonemal complex protein 1 (871 aa).

Positions 1–40 (MQKLGFPAMKSLDKPRSLSGSANMYSFSNRKPPDSVSSGS) are disordered. Residues 18–40 (LSGSANMYSFSNRKPPDSVSSGS) are compositionally biased toward polar residues. 2 coiled-coil regions span residues 58 to 304 (MRTD…DKKN) and 331 to 608 (LALD…EESK). Disordered stretches follow at residues 708–741 (VMSD…RSEH) and 778–871 (SVLS…YAFD). The span at 719 to 728 (VNSNKNYSIS) shows a compositional bias: polar residues. Basic and acidic residues predominate over residues 729–741 (KDSRLGGSKRSEH). The span at 831 to 847 (LTPQSIAKGTGMTSHAR) shows a compositional bias: polar residues.

It is found in the nucleus. Functionally, required for chromosome synapsis and normal fidelity of crossing over. The chain is Synaptonemal complex protein 1 (ZYP1A) from Arabidopsis thaliana (Mouse-ear cress).